The sequence spans 814 residues: E3 ubiquitin-protein ligase TRIM71 (814 aa).

Residues 12 to 76 form an RING-type zinc finger; the sequence is CPLCKEMCVS…SLQLRCPVCD (65 aa). A disordered region spans residues 111 to 146; it reads QQQSNGGRTASNRQRSASCSSSGLLRRAPPSQSEPR. Residues 120–138 show a composition bias toward low complexity; it reads ASNRQRSASCSSSGLLRRA. The segment at 142–189 adopts a B box-type 1; atypical zinc-finger fold; the sequence is QSEPRCSSCDDGNGASSHCLDCQENLCDNCLRAHQRVRLTKDHFIERF. Residues cysteine 147, cysteine 150, cysteine 171, histidine 175, cysteine 224, histidine 227, cysteine 247, and histidine 252 each contribute to the Zn(2+) site. A B box-type 2 zinc finger spans residues 219–260; sequence PERLYCQQHDEEVLHFYCDSCSVPICRECTMGRHAGHSFVYL. Residues 282 to 370 are a coiled coil; it reads RQAIQLSLEQ…INAVQQVLEE (89 aa). One copy of the Filamin repeat lies at 425–526; that stretch reads SSGAFAALTK…IENSPFKVNV (102 aa). NHL repeat units lie at residues 539–582, 586–629, 633–676, 680–723, 727–770, and 774–814; these read TLSF…FKPC, HHKF…FTFE, LLKF…FGPD, LNKY…IKPD, AHFL…FEPN, and LCKF…ILAF.

Belongs to the TRIM/RBCC family.

The protein resides in the cytoplasm. The protein localises to the P-body. The enzyme catalyses S-ubiquitinyl-[E2 ubiquitin-conjugating enzyme]-L-cysteine + [acceptor protein]-L-lysine = [E2 ubiquitin-conjugating enzyme]-L-cysteine + N(6)-ubiquitinyl-[acceptor protein]-L-lysine.. It participates in protein modification; protein ubiquitination. Functionally, E3 ubiquitin-protein ligase that cooperates with the microRNAs (miRNAs) machinery and promotes embryonic stem cells proliferation and maintenance. Binds to miRNAs and participates in post-transcriptional repression of transcripts. Required to maintain proliferation and prevent premature differentiation of neural progenitor cells during early neural development. The protein is E3 ubiquitin-protein ligase TRIM71 (trim71) of Xenopus tropicalis (Western clawed frog).